The following is a 358-amino-acid chain: 5-amino-6-(D-ribitylamino)uracil--L-tyrosine 4-hydroxyphenyl transferase 2 (358 aa).

Residues 45 to 292 (VTFVKNTNIE…ESIKNIQAPR (248 aa)) form the Radical SAM core domain. Positions 59, 63, and 66 each coordinate [4Fe-4S] cluster.

Belongs to the radical SAM superfamily. CofH family. Consists of two subunits, CofG and CofH. It depends on [4Fe-4S] cluster as a cofactor.

It carries out the reaction 5-amino-6-(D-ribitylamino)uracil + L-tyrosine + S-adenosyl-L-methionine = 5-amino-5-(4-hydroxybenzyl)-6-(D-ribitylimino)-5,6-dihydrouracil + 2-iminoacetate + 5'-deoxyadenosine + L-methionine + H(+). The protein operates within cofactor biosynthesis; coenzyme F0 biosynthesis. In terms of biological role, catalyzes the radical-mediated synthesis of 5-amino-5-(4-hydroxybenzyl)-6-(D-ribitylimino)-5,6-dihydrouracil from 5-amino-6-(D-ribitylamino)uracil and L-tyrosine. This chain is 5-amino-6-(D-ribitylamino)uracil--L-tyrosine 4-hydroxyphenyl transferase 2, found in Methanococcus maripaludis (strain DSM 14266 / JCM 13030 / NBRC 101832 / S2 / LL).